The primary structure comprises 261 residues: Hemin import ATP-binding protein HmuV (261 aa).

An ABC transporter domain is found at 2 to 243 (LCANNVSAQI…ALLKRVYNIN (242 aa)). 34–41 (GPNGAGKS) contributes to the ATP binding site.

Belongs to the ABC transporter superfamily. Heme (hemin) importer (TC 3.A.1.14.5) family. As to quaternary structure, the complex is composed of two ATP-binding proteins (HmuV), two transmembrane proteins (HmuU) and a solute-binding protein (HmuT).

Its subcellular location is the cell inner membrane. Its function is as follows. Part of the ABC transporter complex HmuTUV involved in hemin import. Responsible for energy coupling to the transport system. The sequence is that of Hemin import ATP-binding protein HmuV from Pseudoalteromonas translucida (strain TAC 125).